The sequence spans 185 residues: Probable nicotinate-nucleotide adenylyltransferase (185 aa).

Belongs to the NadD family.

The enzyme catalyses nicotinate beta-D-ribonucleotide + ATP + H(+) = deamido-NAD(+) + diphosphate. The protein operates within cofactor biosynthesis; NAD(+) biosynthesis; deamido-NAD(+) from nicotinate D-ribonucleotide: step 1/1. Catalyzes the reversible adenylation of nicotinate mononucleotide (NaMN) to nicotinic acid adenine dinucleotide (NaAD). In Methylorubrum extorquens (strain PA1) (Methylobacterium extorquens), this protein is Probable nicotinate-nucleotide adenylyltransferase.